A 637-amino-acid chain; its full sequence is Probable potassium transport system protein Kup 2 (637 aa).

Positions M1–A21 are disordered. The next 12 helical transmembrane spans lie at L29 to F49, V68 to V88, L116 to P136, V150 to F170, V180 to L200, A228 to V248, I258 to G278, A300 to I320, L359 to A379, A381 to M401, L409 to A429, and I434 to T454.

Belongs to the HAK/KUP transporter (TC 2.A.72) family.

The protein localises to the cell inner membrane. It carries out the reaction K(+)(in) + H(+)(in) = K(+)(out) + H(+)(out). In terms of biological role, transport of potassium into the cell. Likely operates as a K(+):H(+) symporter. This is Probable potassium transport system protein Kup 2 from Mesorhizobium japonicum (strain LMG 29417 / CECT 9101 / MAFF 303099) (Mesorhizobium loti (strain MAFF 303099)).